The sequence spans 86 residues: Large ribosomal subunit protein uL23 (86 aa).

The protein belongs to the universal ribosomal protein uL23 family. As to quaternary structure, part of the 50S ribosomal subunit. Contacts protein L29.

In terms of biological role, binds to 23S rRNA. One of the proteins that surrounds the polypeptide exit tunnel on the outside of the ribosome. This is Large ribosomal subunit protein uL23 from Thermococcus sibiricus (strain DSM 12597 / MM 739).